The primary structure comprises 635 residues: Beta-mannosyltransferase 2 (635 aa).

Over 1–6 (MRTRLN) the chain is Cytoplasmic. The chain crosses the membrane as a helical span at residues 7 to 27 (FLLLCIASVLSVIWIGVLLTW). At 28-635 (NDNNLGGISL…EKKEAEKKGK (608 aa)) the chain is on the extracellular side. A glycan (N-linked (GlcNAc...) asparagine) is linked at N484. Residues 512–635 (TRGEAERRRR…EKKEAEKKGK (124 aa)) adopt a coiled-coil conformation. A disordered region spans residues 517-635 (ERRRRVAEER…EKKEAEKKGK (119 aa)).

This sequence belongs to the BMT family.

The protein resides in the membrane. Its function is as follows. Beta-mannosyltransferase involved in cell wall biosynthesis. Initiates the beta-mannosylation of core N-linked glycans. This Komagataella phaffii (strain ATCC 76273 / CBS 7435 / CECT 11047 / NRRL Y-11430 / Wegner 21-1) (Yeast) protein is Beta-mannosyltransferase 2 (BMT2).